Consider the following 353-residue polypeptide: Divinyl chlorophyll a/b light-harvesting protein PcbG (353 aa).

A run of 6 helical transmembrane segments spans residues 28–48, 64–84, 90–110, 204–224, 244–264, and 308–328; these read FISS…ANTL, GLVV…NGVF, LLVV…GGML, IMGG…FHIL, FVLS…ALWC, and LTNV…FHGL.

Belongs to the PsbB/PsbC family. IsiA/Pcb subfamily. The antenna complex consists of divinyl chlorophylls (a and b) and divinyl chlorophyll a/b binding proteins and binds more divinyl chlorophyll b than does the antenna complex from high-light-adapted Prochlorococcus. Also forms complexes with PSI, consisting of a PSI trimer with surrounded by a PcbG ring (probably with 18 subunits). Is the only subunit found in this ring under iron-replete conditions. It depends on divinyl chlorophyll a as a cofactor. The cofactor is divinyl chlorophyll b.

It localises to the cellular thylakoid membrane. Functionally, the antenna complex functions as a light receptor, it captures and delivers excitation energy to photosystems I. The Prochlorales pcb genes are not related to higher plant LHCs. The polypeptide is Divinyl chlorophyll a/b light-harvesting protein PcbG (pcbG) (Prochlorococcus marinus (strain SARG / CCMP1375 / SS120)).